A 403-amino-acid polypeptide reads, in one-letter code: NADH-quinone oxidoreductase subunit D (403 aa).

Belongs to the complex I 49 kDa subunit family. In terms of assembly, NDH-1 is composed of 15 different subunits. Subunits NuoB, C, D, E, F, and G constitute the peripheral sector of the complex.

The protein resides in the cell membrane. The enzyme catalyses a quinone + NADH + 5 H(+)(in) = a quinol + NAD(+) + 4 H(+)(out). In terms of biological role, NDH-1 shuttles electrons from NADH, via FMN and iron-sulfur (Fe-S) centers, to quinones in the respiratory chain. The immediate electron acceptor for the enzyme in this species is believed to be a menaquinone. Couples the redox reaction to proton translocation (for every two electrons transferred, four hydrogen ions are translocated across the cytoplasmic membrane), and thus conserves the redox energy in a proton gradient. This chain is NADH-quinone oxidoreductase subunit D, found in Deinococcus geothermalis (strain DSM 11300 / CIP 105573 / AG-3a).